The following is an 890-amino-acid chain: Alanine--tRNA ligase (890 aa).

Positions 568, 572, 680, and 684 each coordinate Zn(2+).

The protein belongs to the class-II aminoacyl-tRNA synthetase family. It depends on Zn(2+) as a cofactor.

It localises to the cytoplasm. The catalysed reaction is tRNA(Ala) + L-alanine + ATP = L-alanyl-tRNA(Ala) + AMP + diphosphate. Its function is as follows. Catalyzes the attachment of alanine to tRNA(Ala) in a two-step reaction: alanine is first activated by ATP to form Ala-AMP and then transferred to the acceptor end of tRNA(Ala). Also edits incorrectly charged Ser-tRNA(Ala) and Gly-tRNA(Ala) via its editing domain. The protein is Alanine--tRNA ligase of Psychrobacter cryohalolentis (strain ATCC BAA-1226 / DSM 17306 / VKM B-2378 / K5).